Consider the following 276-residue polypeptide: Ribosomal RNA small subunit methyltransferase A (276 aa).

S-adenosyl-L-methionine contacts are provided by Asn-27, Leu-29, Gly-54, Glu-75, Asp-101, and Asn-123.

Belongs to the class I-like SAM-binding methyltransferase superfamily. rRNA adenine N(6)-methyltransferase family. RsmA subfamily.

Its subcellular location is the cytoplasm. It catalyses the reaction adenosine(1518)/adenosine(1519) in 16S rRNA + 4 S-adenosyl-L-methionine = N(6)-dimethyladenosine(1518)/N(6)-dimethyladenosine(1519) in 16S rRNA + 4 S-adenosyl-L-homocysteine + 4 H(+). Functionally, specifically dimethylates two adjacent adenosines (A1518 and A1519) in the loop of a conserved hairpin near the 3'-end of 16S rRNA in the 30S particle. May play a critical role in biogenesis of 30S subunits. This is Ribosomal RNA small subunit methyltransferase A from Bartonella tribocorum (strain CIP 105476 / IBS 506).